Here is a 154-residue protein sequence, read N- to C-terminus: Putative nuclear shuttle protein (154 aa).

The protein belongs to the nanoviridae nuclear shuttle protein family.

Its subcellular location is the host nucleus. The protein localises to the host cytoplasm. Functionally, putative nuclear shuttle protein. In Musa (BBTV), this protein is Putative nuclear shuttle protein (DNA-N).